The chain runs to 887 residues: Degenerin-like protein unc-105 (887 aa).

The tract at residues 1-33 is disordered; sequence MAEDRIKSKLRRPASIESTMSSRTKPRHKPSPM. The Cytoplasmic portion of the chain corresponds to 1-93; sequence MAEDRIKSKL…AATADGKWRW (93 aa). The helical transmembrane segment at 94-114 threads the bilayer; that stretch reads FWYTAFTICLLALLIQIFFLI. Topologically, residues 115–698 are extracellular; sequence SKYRQYGKTV…SVLADLGGLT (584 aa). N244, N450, N473, N581, and N599 each carry an N-linked (GlcNAc...) asparagine glycan. Residues 699–719 traverse the membrane as a helical segment; the sequence is GLWIGASVVSLLEIVTLIVFA. The Cytoplasmic segment spans residues 720-887; sequence TQAYVRKRKG…YSAPYEHRKK (168 aa). Disordered regions lie at residues 794 to 815 and 859 to 887; these read AIQE…NGSC and SNSE…HRKK.

The protein belongs to the amiloride-sensitive sodium channel (TC 1.A.6) family. As to expression, expressed in body wall muscle.

It localises to the membrane. Its function is as follows. Ion channel which is permeable to small monovalent cations. Shown not to be H+-ion gated. May be mechanosensitive and is required for growth and muscle development. The chain is Degenerin-like protein unc-105 (unc-105) from Caenorhabditis elegans.